Here is a 189-residue protein sequence, read N- to C-terminus: ATP synthase subunit b 1 (189 aa).

A helical transmembrane segment spans residues 32–52 (TYFASQLFWLTIAFVILYIAL).

Belongs to the ATPase B chain family. F-type ATPases have 2 components, F(1) - the catalytic core - and F(0) - the membrane proton channel. F(1) has five subunits: alpha(3), beta(3), gamma(1), delta(1), epsilon(1). F(0) has three main subunits: a(1), b(2) and c(10-14). The alpha and beta chains form an alternating ring which encloses part of the gamma chain. F(1) is attached to F(0) by a central stalk formed by the gamma and epsilon chains, while a peripheral stalk is formed by the delta and b chains.

Its subcellular location is the cell inner membrane. Functionally, f(1)F(0) ATP synthase produces ATP from ADP in the presence of a proton or sodium gradient. F-type ATPases consist of two structural domains, F(1) containing the extramembraneous catalytic core and F(0) containing the membrane proton channel, linked together by a central stalk and a peripheral stalk. During catalysis, ATP synthesis in the catalytic domain of F(1) is coupled via a rotary mechanism of the central stalk subunits to proton translocation. In terms of biological role, component of the F(0) channel, it forms part of the peripheral stalk, linking F(1) to F(0). This Maricaulis maris (strain MCS10) (Caulobacter maris) protein is ATP synthase subunit b 1.